A 479-amino-acid polypeptide reads, in one-letter code: Glutamyl-tRNA(Gln) amidotransferase subunit A (479 aa).

Catalysis depends on charge relay system residues K74 and S149. S173 functions as the Acyl-ester intermediate in the catalytic mechanism.

The protein belongs to the amidase family. GatA subfamily. As to quaternary structure, heterotrimer of A, B and C subunits.

The catalysed reaction is L-glutamyl-tRNA(Gln) + L-glutamine + ATP + H2O = L-glutaminyl-tRNA(Gln) + L-glutamate + ADP + phosphate + H(+). Its function is as follows. Allows the formation of correctly charged Gln-tRNA(Gln) through the transamidation of misacylated Glu-tRNA(Gln) in organisms which lack glutaminyl-tRNA synthetase. The reaction takes place in the presence of glutamine and ATP through an activated gamma-phospho-Glu-tRNA(Gln). In Cenarchaeum symbiosum (strain A), this protein is Glutamyl-tRNA(Gln) amidotransferase subunit A.